The sequence spans 438 residues: Methylenetetrahydrofolate--tRNA-(uracil-5-)-methyltransferase TrmFO (438 aa).

9 to 14 (GAGLAG) lines the FAD pocket.

It belongs to the MnmG family. TrmFO subfamily. It depends on FAD as a cofactor.

It is found in the cytoplasm. It carries out the reaction uridine(54) in tRNA + (6R)-5,10-methylene-5,6,7,8-tetrahydrofolate + NADH + H(+) = 5-methyluridine(54) in tRNA + (6S)-5,6,7,8-tetrahydrofolate + NAD(+). It catalyses the reaction uridine(54) in tRNA + (6R)-5,10-methylene-5,6,7,8-tetrahydrofolate + NADPH + H(+) = 5-methyluridine(54) in tRNA + (6S)-5,6,7,8-tetrahydrofolate + NADP(+). Its function is as follows. Catalyzes the folate-dependent formation of 5-methyl-uridine at position 54 (M-5-U54) in all tRNAs. This is Methylenetetrahydrofolate--tRNA-(uracil-5-)-methyltransferase TrmFO from Lactobacillus acidophilus (strain ATCC 700396 / NCK56 / N2 / NCFM).